The primary structure comprises 490 residues: Interferon-induced protein with tetratricopeptide repeats 3 (490 aa).

8 TPR repeats span residues 51–84, 94–127, 136–169, 172–206, 207–240, 241–274, 415–448, and 450–481; these read ATMYNLLAYIKHLDGNNEAALECLRQAEELIQQE, LVTWGNYAWVYYHLGRLSDAQIYVDKVKQTCKKF, SELDCEEGWTQLKCGRNERAKVCFEKALEEKPNN, FSSGLAIAMYHLDNHPEKQFSTDVLKQAIELSPDN, QYVKVLLGLKLQKMNKEAEGEQFVEEALEKSPCQ, TDVLRSAAKFYRRKGDLDKAIELFQRVLESTPNN, PNYWYLQGLIHKQNGDLLQAAKCYEKELGRLLRD, and PSGIGSIFLSASELEDGSEEMGQGAVSSSPRE. Ser203 and Ser237 each carry phosphoserine. Positions 467 to 490 are disordered; sequence SEEMGQGAVSSSPRELLSNSEQLN. Positions 474–490 are enriched in polar residues; it reads AVSSSPRELLSNSEQLN. Ser478 is modified (phosphoserine).

The protein belongs to the IFIT family. As to quaternary structure, component of an interferon-dependent multiprotein complex, at least composed of IFIT1, IFIT2 and IFIT3. Interacts with IFIT1 and IFIT2. Interacts (via N-terminus) with MAVS, TBK1, TRAF6 and RIGI. Interacts with COPS5. In terms of tissue distribution, expression significantly higher in peripheral blood mononuclear cells (PBMCs) and monocytes from systemic lupus erythematosus (SLE) patients than in those from healthy individuals (at protein level). Spleen, lung, leukocytes, lymph nodes, placenta, bone marrow and fetal liver.

The protein resides in the cytoplasm. The protein localises to the mitochondrion. IFN-induced antiviral protein which acts as an inhibitor of cellular as well as viral processes, cell migration, proliferation, signaling, and viral replication. Enhances MAVS-mediated host antiviral responses by serving as an adapter bridging TBK1 to MAVS which leads to the activation of TBK1 and phosphorylation of IRF3 and phosphorylated IRF3 translocates into nucleus to promote antiviral gene transcription. Exhibits an antiproliferative activity via the up-regulation of cell cycle negative regulators CDKN1A/p21 and CDKN1B/p27. Normally, CDKN1B/p27 turnover is regulated by COPS5, which binds CDKN1B/p27 in the nucleus and exports it to the cytoplasm for ubiquitin-dependent degradation. IFIT3 sequesters COPS5 in the cytoplasm, thereby increasing nuclear CDKN1B/p27 protein levels. Up-regulates CDKN1A/p21 by down-regulating MYC, a repressor of CDKN1A/p21. Can negatively regulate the apoptotic effects of IFIT2. The polypeptide is Interferon-induced protein with tetratricopeptide repeats 3 (IFIT3) (Homo sapiens (Human)).